A 511-amino-acid polypeptide reads, in one-letter code: GMP synthase [glutamine-hydrolyzing] (511 aa).

The Glutamine amidotransferase type-1 domain maps to 5–195 (DILVLDFGSQ…AKYACNCESI (191 aa)). Catalysis depends on cysteine 82, which acts as the Nucleophile. Residues histidine 169 and glutamate 171 contribute to the active site. Positions 196-386 (WNMGSFAKTQ…LGLSKEVVYR (191 aa)) constitute a GMPS ATP-PPase domain. 223-229 (SGGVDSS) is a binding site for ATP.

As to quaternary structure, homodimer.

The enzyme catalyses XMP + L-glutamine + ATP + H2O = GMP + L-glutamate + AMP + diphosphate + 2 H(+). It functions in the pathway purine metabolism; GMP biosynthesis; GMP from XMP (L-Gln route): step 1/1. In terms of biological role, catalyzes the synthesis of GMP from XMP. In Campylobacter jejuni subsp. jejuni serotype O:2 (strain ATCC 700819 / NCTC 11168), this protein is GMP synthase [glutamine-hydrolyzing] (guaA).